The sequence spans 285 residues: 4-diphosphocytidyl-2-C-methyl-D-erythritol kinase (285 aa).

Lys12 is a catalytic residue. 94–104 (PAQAGMGGGSS) provides a ligand contact to ATP. Asp136 is a catalytic residue.

This sequence belongs to the GHMP kinase family. IspE subfamily.

It catalyses the reaction 4-CDP-2-C-methyl-D-erythritol + ATP = 4-CDP-2-C-methyl-D-erythritol 2-phosphate + ADP + H(+). Its pathway is isoprenoid biosynthesis; isopentenyl diphosphate biosynthesis via DXP pathway; isopentenyl diphosphate from 1-deoxy-D-xylulose 5-phosphate: step 3/6. In terms of biological role, catalyzes the phosphorylation of the position 2 hydroxy group of 4-diphosphocytidyl-2C-methyl-D-erythritol. This Paracidovorax citrulli (strain AAC00-1) (Acidovorax citrulli) protein is 4-diphosphocytidyl-2-C-methyl-D-erythritol kinase.